The following is a 283-amino-acid chain: Pyridoxal kinase PdxY (283 aa).

Residue Ser8 participates in substrate binding. The ATP site is built by Asp110 and Glu147. Position 219 (Asp219) interacts with substrate.

This sequence belongs to the pyridoxine kinase family. PdxY subfamily. As to quaternary structure, homodimer. The cofactor is Mg(2+).

It carries out the reaction pyridoxal + ATP = pyridoxal 5'-phosphate + ADP + H(+). It functions in the pathway cofactor metabolism; pyridoxal 5'-phosphate salvage; pyridoxal 5'-phosphate from pyridoxal: step 1/1. Its function is as follows. Pyridoxal kinase involved in the salvage pathway of pyridoxal 5'-phosphate (PLP). Catalyzes the phosphorylation of pyridoxal to PLP. This chain is Pyridoxal kinase PdxY, found in Leifsonia xyli subsp. xyli (strain CTCB07).